Reading from the N-terminus, the 105-residue chain is Thioredoxin (105 aa).

The Thioredoxin domain occupies 1–105; the sequence is MANNVTDSSF…SLLDWINKSI (105 aa). An intrachain disulfide couples C30 to C33.

Belongs to the thioredoxin family.

In terms of biological role, component of the thioredoxin-thioredoxin reductase system. Participates in various redox reactions through the reversible oxidation of its active center dithiol to a disulfide and catalyzes dithiol-disulfide exchange reactions. The chain is Thioredoxin (trxA) from Rickettsia felis (strain ATCC VR-1525 / URRWXCal2) (Rickettsia azadi).